Consider the following 269-residue polypeptide: Thymidylate synthase (269 aa).

DUMP-binding positions include Arg-21 and 125-126; that span reads RR. The active-site Nucleophile is the Cys-145. Residues 171–174, Asn-182, and 212–214 contribute to the dUMP site; these read RSGD and HVY. Asp-174 is a binding site for (6R)-5,10-methylene-5,6,7,8-tetrahydrofolate. Residue Ala-268 coordinates (6R)-5,10-methylene-5,6,7,8-tetrahydrofolate.

This sequence belongs to the thymidylate synthase family. Bacterial-type ThyA subfamily. Homodimer.

The protein resides in the cytoplasm. It catalyses the reaction dUMP + (6R)-5,10-methylene-5,6,7,8-tetrahydrofolate = 7,8-dihydrofolate + dTMP. It participates in pyrimidine metabolism; dTTP biosynthesis. Catalyzes the reductive methylation of 2'-deoxyuridine-5'-monophosphate (dUMP) to 2'-deoxythymidine-5'-monophosphate (dTMP) while utilizing 5,10-methylenetetrahydrofolate (mTHF) as the methyl donor and reductant in the reaction, yielding dihydrofolate (DHF) as a by-product. This enzymatic reaction provides an intracellular de novo source of dTMP, an essential precursor for DNA biosynthesis. The polypeptide is Thymidylate synthase (Cutibacterium acnes (strain DSM 16379 / KPA171202) (Propionibacterium acnes)).